We begin with the raw amino-acid sequence, 173 residues long: ATP-dependent protease subunit HslV (173 aa).

Residue T2 is part of the active site. Na(+) is bound by residues G158, D161, and T164.

This sequence belongs to the peptidase T1B family. HslV subfamily. As to quaternary structure, a double ring-shaped homohexamer of HslV is capped on each side by a ring-shaped HslU homohexamer. The assembly of the HslU/HslV complex is dependent on binding of ATP.

It is found in the cytoplasm. It catalyses the reaction ATP-dependent cleavage of peptide bonds with broad specificity.. Its activity is regulated as follows. Allosterically activated by HslU binding. Protease subunit of a proteasome-like degradation complex believed to be a general protein degrading machinery. This Actinobacillus succinogenes (strain ATCC 55618 / DSM 22257 / CCUG 43843 / 130Z) protein is ATP-dependent protease subunit HslV.